The primary structure comprises 149 residues: Protein SprT-like (149 aa).

Residues Thr-4 to Leu-143 enclose the SprT-like domain. His-64 is a Zn(2+) binding site. The active site involves Glu-65. His-68 serves as a coordination point for Zn(2+).

It belongs to the SprT family. It depends on Zn(2+) as a cofactor.

The protein resides in the cytoplasm. This is Protein SprT-like from Streptococcus pneumoniae (strain Taiwan19F-14).